The chain runs to 214 residues: Pyrrolidone-carboxylate peptidase (214 aa).

Residues E78, C141, and H165 contribute to the active site.

It belongs to the peptidase C15 family. Homotetramer.

Its subcellular location is the cytoplasm. It catalyses the reaction Release of an N-terminal pyroglutamyl group from a polypeptide, the second amino acid generally not being Pro.. In terms of biological role, removes 5-oxoproline from various penultimate amino acid residues except L-proline. The protein is Pyrrolidone-carboxylate peptidase of Streptococcus pneumoniae (strain 70585).